Consider the following 183-residue polypeptide: UPF0114 protein HI_0507 (183 aa).

The next 3 membrane-spanning stretches (helical) occupy residues 30-50, 68-88, and 150-170; these read LQVP…YKFI, IMLG…LVMV, and TMMW…ALAY.

The protein belongs to the UPF0114 family.

Its subcellular location is the cell membrane. The polypeptide is UPF0114 protein HI_0507 (Haemophilus influenzae (strain ATCC 51907 / DSM 11121 / KW20 / Rd)).